Here is a 306-residue protein sequence, read N- to C-terminus: Methionyl-tRNA formyltransferase (306 aa).

(6S)-5,6,7,8-tetrahydrofolate is bound at residue 108–111 (SLLP).

Belongs to the Fmt family.

It carries out the reaction L-methionyl-tRNA(fMet) + (6R)-10-formyltetrahydrofolate = N-formyl-L-methionyl-tRNA(fMet) + (6S)-5,6,7,8-tetrahydrofolate + H(+). Functionally, attaches a formyl group to the free amino group of methionyl-tRNA(fMet). The formyl group appears to play a dual role in the initiator identity of N-formylmethionyl-tRNA by promoting its recognition by IF2 and preventing the misappropriation of this tRNA by the elongation apparatus. The polypeptide is Methionyl-tRNA formyltransferase (Arthrobacter sp. (strain FB24)).